Reading from the N-terminus, the 276-residue chain is NADPH-dependent 7-cyano-7-deazaguanine reductase (276 aa).

Residue 83–85 coordinates substrate; it reads IES. 85 to 86 contributes to the NADPH binding site; the sequence is SK. Cys184 serves as the catalytic Thioimide intermediate. The active-site Proton donor is the Asp191. Position 223–224 (223–224) interacts with substrate; the sequence is HE. 252–253 is a binding site for NADPH; the sequence is RG.

The protein belongs to the GTP cyclohydrolase I family. QueF type 2 subfamily. As to quaternary structure, homodimer.

It is found in the cytoplasm. It catalyses the reaction 7-aminomethyl-7-carbaguanine + 2 NADP(+) = 7-cyano-7-deazaguanine + 2 NADPH + 3 H(+). Its pathway is tRNA modification; tRNA-queuosine biosynthesis. In terms of biological role, catalyzes the NADPH-dependent reduction of 7-cyano-7-deazaguanine (preQ0) to 7-aminomethyl-7-deazaguanine (preQ1). This Pseudomonas savastanoi pv. phaseolicola (strain 1448A / Race 6) (Pseudomonas syringae pv. phaseolicola (strain 1448A / Race 6)) protein is NADPH-dependent 7-cyano-7-deazaguanine reductase.